A 214-amino-acid polypeptide reads, in one-letter code: Killer cell lectin-like receptor subfamily B member 1 (214 aa).

The Cytoplasmic portion of the chain corresponds to 1-42 (MDAPVLYAELNLAETRGLRCTSAPSLPQDACQGPGWHRVALK). Residues 43 to 63 (LGCAGLIFLLMVLSVLVGFLV) traverse the membrane as a helical; Signal-anchor for type II membrane protein segment. The Extracellular segment spans residues 64 to 214 (QKPLIEKCSV…WICQKTLKHV (151 aa)). Residues 98–208 (HCDKCLFTSQ…CSSDNHWICQ (111 aa)) form the C-type lectin domain. Disulfide bonds link Cys-119–Cys-207 and Cys-186–Cys-199.

It localises to the membrane. In Mus musculus (Mouse), this protein is Killer cell lectin-like receptor subfamily B member 1 (Klrb1).